We begin with the raw amino-acid sequence, 382 residues long: Small ribosomal subunit protein bS1 homolog (382 aa).

4 consecutive S1 motif domains span residues 16 to 84 (GDVV…LSKR), 102 to 167 (KEVF…LSHR), 188 to 256 (GSVL…LSIK), and 273 to 342 (GDVL…LSMR). Ser-243 is modified (phosphoserine).

The protein belongs to the bacterial ribosomal protein bS1 family.

In terms of biological role, plays a role in sporulation. Cannot be expressed in wild-type E.coli, does not complement an E.coli rpsA deletion. The sequence is that of Small ribosomal subunit protein bS1 homolog from Bacillus subtilis (strain 168).